The chain runs to 274 residues: NADPH-dependent 7-cyano-7-deazaguanine reductase (274 aa).

80–82 (VES) lines the substrate pocket. NADPH is bound at residue 82-83 (SK). Cysteine 181 functions as the Thioimide intermediate in the catalytic mechanism. The Proton donor role is filled by aspartate 188. 220 to 221 (HE) contacts substrate. NADPH is bound at residue 249–250 (RG).

This sequence belongs to the GTP cyclohydrolase I family. QueF type 2 subfamily. In terms of assembly, homodimer.

The protein localises to the cytoplasm. The catalysed reaction is 7-aminomethyl-7-carbaguanine + 2 NADP(+) = 7-cyano-7-deazaguanine + 2 NADPH + 3 H(+). Its pathway is tRNA modification; tRNA-queuosine biosynthesis. Catalyzes the NADPH-dependent reduction of 7-cyano-7-deazaguanine (preQ0) to 7-aminomethyl-7-deazaguanine (preQ1). This is NADPH-dependent 7-cyano-7-deazaguanine reductase from Burkholderia thailandensis (strain ATCC 700388 / DSM 13276 / CCUG 48851 / CIP 106301 / E264).